Consider the following 232-residue polypeptide: Phosphatidylserine decarboxylase proenzyme (232 aa).

The Schiff-base intermediate with substrate; via pyruvic acid role is filled by Ser190. Ser190 is subject to Pyruvic acid (Ser); by autocatalysis.

It belongs to the phosphatidylserine decarboxylase family. PSD-A subfamily. Heterodimer of a large membrane-associated beta subunit and a small pyruvoyl-containing alpha subunit. Requires pyruvate as cofactor. Post-translationally, is synthesized initially as an inactive proenzyme. Formation of the active enzyme involves a self-maturation process in which the active site pyruvoyl group is generated from an internal serine residue via an autocatalytic post-translational modification. Two non-identical subunits are generated from the proenzyme in this reaction, and the pyruvate is formed at the N-terminus of the alpha chain, which is derived from the carboxyl end of the proenzyme. The post-translation cleavage follows an unusual pathway, termed non-hydrolytic serinolysis, in which the side chain hydroxyl group of the serine supplies its oxygen atom to form the C-terminus of the beta chain, while the remainder of the serine residue undergoes an oxidative deamination to produce ammonia and the pyruvoyl prosthetic group on the alpha chain.

The protein localises to the cell membrane. It catalyses the reaction a 1,2-diacyl-sn-glycero-3-phospho-L-serine + H(+) = a 1,2-diacyl-sn-glycero-3-phosphoethanolamine + CO2. It functions in the pathway phospholipid metabolism; phosphatidylethanolamine biosynthesis; phosphatidylethanolamine from CDP-diacylglycerol: step 2/2. Its function is as follows. Catalyzes the formation of phosphatidylethanolamine (PtdEtn) from phosphatidylserine (PtdSer). This is Phosphatidylserine decarboxylase proenzyme from Rhizobium etli (strain ATCC 51251 / DSM 11541 / JCM 21823 / NBRC 15573 / CFN 42).